A 196-amino-acid polypeptide reads, in one-letter code: Peptidyl-tRNA hydrolase (196 aa).

Residue Y18 participates in tRNA binding. The active-site Proton acceptor is the H23. TRNA contacts are provided by F69, N71, and N117.

Belongs to the PTH family. As to quaternary structure, monomer.

Its subcellular location is the cytoplasm. It carries out the reaction an N-acyl-L-alpha-aminoacyl-tRNA + H2O = an N-acyl-L-amino acid + a tRNA + H(+). In terms of biological role, hydrolyzes ribosome-free peptidyl-tRNAs (with 1 or more amino acids incorporated), which drop off the ribosome during protein synthesis, or as a result of ribosome stalling. Functionally, catalyzes the release of premature peptidyl moieties from peptidyl-tRNA molecules trapped in stalled 50S ribosomal subunits, and thus maintains levels of free tRNAs and 50S ribosomes. In Aliivibrio fischeri (strain MJ11) (Vibrio fischeri), this protein is Peptidyl-tRNA hydrolase.